Consider the following 358-residue polypeptide: Aromatic amino acid aminotransferase (358 aa).

Lys219 carries the post-translational modification N6-(pyridoxal phosphate)lysine.

Belongs to the class-II pyridoxal-phosphate-dependent aminotransferase family. Homodimer. The cofactor is pyridoxal 5'-phosphate.

The catalysed reaction is an aromatic L-alpha-amino acid + 2-oxoglutarate = an aromatic oxo-acid + L-glutamate. Its function is as follows. Aminotransferase that catalyzes the conversion of aromatic amino acids and 2-oxoglutarate into corresponding aromatic oxo acids and L-glutamate. This is Aromatic amino acid aminotransferase from Nocardia farcinica (strain IFM 10152).